The primary structure comprises 530 residues: PTS system maltose-specific EIICB component (530 aa).

The PTS EIIC type-1 domain occupies 1–431 (MTAKTAPKVT…FNLKTPGRDS (431 aa)). 10 helical membrane-spanning segments follow: residues 22 to 42 (FMLPVALLSFCGIMLGIGSSL), 69 to 89 (IGSFAFSFLPVMFCIAIPLGL), 96 to 116 (VAAFAGFIGYAVMNLAVNFWL), 138 to 158 (ILGIQSIDTGILGAVIAGIIV), 189 to 209 (LVMGLVGLVIPLVWPIFAMGI), 289 to 309 (FLSQGKMPAFLGGLPGAALAM), 321 to 341 (IKGLLISGLIACVVGGTTEPL), 343 to 363 (FLFLFVAPVLYVIHALLTGLG), 369 to 389 (VLGVTIGNTDGNIIDFVVFGI), and 399 to 419 (MVPVVAAIWFVVYYVIFRFAI). Residues 449-530 (GYNVPAILEA…MAGLMHTVQA (82 aa)) form the PTS EIIB type-1 domain. Cys-471 serves as the catalytic Phosphocysteine intermediate; for EIIB activity.

It is found in the cell inner membrane. It catalyses the reaction D-maltose(out) + N(pros)-phospho-L-histidyl-[protein] = alpha-maltose 6'-phosphate(in) + L-histidyl-[protein]. Functionally, the phosphoenolpyruvate-dependent sugar phosphotransferase system (sugar PTS), a major carbohydrate active transport system, catalyzes the phosphorylation of incoming sugar substrates concomitantly with their translocation across the cell membrane. This system is involved in maltose transport. MalX can also recognize and transport glucose even though this sugar may not represent the natural substrate of the system. This is PTS system maltose-specific EIICB component from Escherichia coli (strain K12).